The following is a 304-amino-acid chain: GTPase Era (304 aa).

One can recognise an Era-type G domain in the interval 7 to 178; it reads KCGVVAVLGA…KNALAALMPE (172 aa). The G1 stretch occupies residues 15–22; the sequence is GAPNAGKS. Position 15-22 (15-22) interacts with GTP; the sequence is GAPNAGKS. Positions 41 to 45 are G2; it reads QTTRA. Positions 66–69 are G3; it reads DTPG. GTP-binding positions include 66 to 70 and 128 to 131; these read DTPGI and NKVD. A G4 region spans residues 128–131; it reads NKVD. Positions 157–159 are G5; sequence VSA. The 78-residue stretch at 209–286 folds into the KH type-2 domain; it reads LHEELPYDSA…HLFLHVKVDE (78 aa).

This sequence belongs to the TRAFAC class TrmE-Era-EngA-EngB-Septin-like GTPase superfamily. Era GTPase family. As to quaternary structure, monomer.

It is found in the cytoplasm. The protein localises to the cell inner membrane. Its function is as follows. An essential GTPase that binds both GDP and GTP, with rapid nucleotide exchange. Plays a role in 16S rRNA processing and 30S ribosomal subunit biogenesis and possibly also in cell cycle regulation and energy metabolism. This chain is GTPase Era, found in Erythrobacter litoralis (strain HTCC2594).